A 1052-amino-acid polypeptide reads, in one-letter code: Isoleucine--tRNA ligase (1052 aa).

The short motif at 58-68 (PFANGLPHYGH) is the 'HIGH' region element. Positions 627–631 (KMSKS) match the 'KMSKS' region motif. Lys-630 lines the ATP pocket.

Belongs to the class-I aminoacyl-tRNA synthetase family. IleS type 2 subfamily. Monomer. It depends on Zn(2+) as a cofactor.

The protein resides in the cytoplasm. It catalyses the reaction tRNA(Ile) + L-isoleucine + ATP = L-isoleucyl-tRNA(Ile) + AMP + diphosphate. Its function is as follows. Catalyzes the attachment of isoleucine to tRNA(Ile). As IleRS can inadvertently accommodate and process structurally similar amino acids such as valine, to avoid such errors it has two additional distinct tRNA(Ile)-dependent editing activities. One activity is designated as 'pretransfer' editing and involves the hydrolysis of activated Val-AMP. The other activity is designated 'posttransfer' editing and involves deacylation of mischarged Val-tRNA(Ile). The polypeptide is Isoleucine--tRNA ligase (Corynebacterium diphtheriae (strain ATCC 700971 / NCTC 13129 / Biotype gravis)).